The primary structure comprises 344 residues: GDSL esterase/lipase At2g19010 (344 aa).

The N-terminal stretch at 1–21 (MSKACWLVAAIIFTAATVVYG) is a signal peptide. The active-site Nucleophile is the S33. N-linked (GlcNAc...) asparagine glycosylation occurs at N303. Residues D311 and H314 contribute to the active site.

Belongs to the 'GDSL' lipolytic enzyme family.

It localises to the secreted. The protein is GDSL esterase/lipase At2g19010 of Arabidopsis thaliana (Mouse-ear cress).